The primary structure comprises 817 residues: Phospholipase D alpha 2 (817 aa).

Residues 1–130 (MAHLLLHGTL…LSGEAIERRL (130 aa)) enclose the C2 domain. Asp-192 provides a ligand contact to Ca(2+). Residues 333–372 (YMITHHQKTVIVDHDMPVPRGGGSRRIVSFVGGLDLCDGR) enclose the PLD phosphodiesterase 1 domain. Residues His-338, Lys-340, and Asp-345 contribute to the active site. Residue His-338 participates in a 1,2-diacyl-sn-glycero-3-phosphate binding. Ca(2+)-binding residues include His-378 and His-412. Gln-529 and His-668 together coordinate a 1,2-diacyl-sn-glycero-3-phosphate. Residues 663–690 (FMIYVHSKMMIVDDEYIIVGSANINQRS) enclose the PLD phosphodiesterase 2 domain. Residues His-668, Lys-670, and Asp-675 contribute to the active site. Glu-730 lines the Ca(2+) pocket.

Belongs to the phospholipase D family. C2-PLD subfamily. Requires Ca(2+) as cofactor.

It carries out the reaction a 1,2-diacyl-sn-glycero-3-phosphocholine + H2O = a 1,2-diacyl-sn-glycero-3-phosphate + choline + H(+). In terms of biological role, hydrolyzes glycerol-phospholipids at the terminal phosphodiesteric bond. Plays an important role in various cellular processes. The sequence is that of Phospholipase D alpha 2 (PLD2) from Oryza sativa subsp. japonica (Rice).